Reading from the N-terminus, the 278-residue chain is Elongation factor Ts (278 aa).

The segment at 80–83 (TDFV) is involved in Mg(2+) ion dislocation from EF-Tu.

Belongs to the EF-Ts family.

Its subcellular location is the cytoplasm. Associates with the EF-Tu.GDP complex and induces the exchange of GDP to GTP. It remains bound to the aminoacyl-tRNA.EF-Tu.GTP complex up to the GTP hydrolysis stage on the ribosome. The polypeptide is Elongation factor Ts (Pseudarthrobacter chlorophenolicus (strain ATCC 700700 / DSM 12829 / CIP 107037 / JCM 12360 / KCTC 9906 / NCIMB 13794 / A6) (Arthrobacter chlorophenolicus)).